Here is a 701-residue protein sequence, read N- to C-terminus: Polyribonucleotide nucleotidyltransferase (701 aa).

Mg(2+) contacts are provided by D487 and D493. The 60-residue stretch at 553 to 612 folds into the KH domain; sequence PRLYTLRINPDKIRDVIGKGGSVIRALTEETGTSIDIAEDGLITIASVSAEGAEEAKRRI. Residues 622–692 enclose the S1 motif domain; it reads GKIYEGTVVK…ERGRIRLSIK (71 aa).

The protein belongs to the polyribonucleotide nucleotidyltransferase family. Mg(2+) is required as a cofactor.

It is found in the cytoplasm. It catalyses the reaction RNA(n+1) + phosphate = RNA(n) + a ribonucleoside 5'-diphosphate. Its function is as follows. Involved in mRNA degradation. Catalyzes the phosphorolysis of single-stranded polyribonucleotides processively in the 3'- to 5'-direction. The protein is Polyribonucleotide nucleotidyltransferase of Laribacter hongkongensis (strain HLHK9).